The primary structure comprises 686 residues: Proprotein convertase subtilisin/kexin type 9 (686 aa).

A signal peptide spans M1 to A28. Residues Q29 to Q150 constitute a propeptide that is removed on maturation. Y36 is modified (sulfotyrosine). S45 is subject to Phosphoserine. An Inhibitor I9 domain is found at T75–V147. Positions P153–W459 constitute a Peptidase S8 domain. Residues D184 and H224 each act as charge relay system in the active site. 2 disulfides stabilise this stretch: C221–C253 and C321–C356. The active-site Charge relay system is S384. The segment at G448–S686 is C-terminal domain. Disulfide bonds link C455–C525, C475–C524, and C484–C507. N531 carries N-linked (GlcNAc...) asparagine glycosylation. Cystine bridges form between C532-C599, C550-C598, C560-C586, C606-C677, C624-C676, and C633-C652. Residue S686 is modified to Phosphoserine.

The protein belongs to the peptidase S8 family. Monomer. Can self-associate to form dimers and higher multimers which may have increased LDLR degrading activity. The precursor protein but not the mature protein may form multimers. Interacts with APOB, VLDLR, LRP8/APOER2 and BACE1. The full-length immature form (pro-PCSK9) interacts with SCNN1A, SCNN1B and SCNN1G. The pro-PCSK9 form (via C-terminal domain) interacts with LDLR. Interacts (via the C-terminal domain) with ANXA2 (via repeat Annexin 1); the interaction inhibits the degradation of LDLR. Ca(2+) is required as a cofactor. Cleavage by furin and PCSK5 generates a truncated inactive protein that is unable to induce LDLR degradation. Post-translationally, undergoes autocatalytic cleavage in the endoplasmic reticulum to release the propeptide from the N-terminus and the cleavage of the propeptide is strictly required for its maturation and activation. The cleaved propeptide however remains associated with the catalytic domain through non-covalent interactions, preventing potential substrates from accessing its active site. As a result, it is secreted from cells as a propeptide-containing, enzymatically inactive protein. In terms of processing, phosphorylation protects the propeptide against proteolysis.

Its subcellular location is the cytoplasm. It localises to the secreted. The protein localises to the endosome. The protein resides in the lysosome. It is found in the cell surface. Its subcellular location is the endoplasmic reticulum. It localises to the golgi apparatus. Its proteolytic activity is autoinhibited by the non-covalent binding of the propeptide to the catalytic domain. Inhibited by EGTA. Crucial player in the regulation of plasma cholesterol homeostasis. Binds to low-density lipid receptor family members: low density lipoprotein receptor (LDLR), very low density lipoprotein receptor (VLDLR), apolipoprotein E receptor (LRP1/APOER) and apolipoprotein receptor 2 (LRP8/APOER2), and promotes their degradation in intracellular acidic compartments. Acts via a non-proteolytic mechanism to enhance the degradation of the hepatic LDLR through a clathrin LDLRAP1/ARH-mediated pathway. May prevent the recycling of LDLR from endosomes to the cell surface or direct it to lysosomes for degradation. Can induce ubiquitination of LDLR leading to its subsequent degradation. Inhibits intracellular degradation of APOB via the autophagosome/lysosome pathway in a LDLR-independent manner. Involved in the disposal of non-acetylated intermediates of BACE1 in the early secretory pathway. Inhibits epithelial Na(+) channel (ENaC)-mediated Na(+) absorption by reducing ENaC surface expression primarily by increasing its proteasomal degradation. Regulates neuronal apoptosis via modulation of LRP8/APOER2 levels and related anti-apoptotic signaling pathways. In Saguinus labiatus (Red-chested mustached tamarin), this protein is Proprotein convertase subtilisin/kexin type 9 (PCSK9).